The sequence spans 157 residues: NADH-quinone oxidoreductase subunit I (157 aa).

2 consecutive 4Fe-4S ferredoxin-type domains span residues 47–78 and 94–123; these read YLTKWNDGLERCVGCELCAIVCPAQAIYVKPA and SDFQINMLRCIFCGYCEEACPTGAIVLSNQ. [4Fe-4S] cluster is bound by residues C58, C61, C64, C68, C103, C106, C109, and C113.

Belongs to the complex I 23 kDa subunit family. In terms of assembly, NDH-1 is composed of 14 different subunits. Subunits NuoA, H, J, K, L, M, N constitute the membrane sector of the complex. [4Fe-4S] cluster serves as cofactor.

The protein localises to the cell inner membrane. The catalysed reaction is a quinone + NADH + 5 H(+)(in) = a quinol + NAD(+) + 4 H(+)(out). In terms of biological role, NDH-1 shuttles electrons from NADH, via FMN and iron-sulfur (Fe-S) centers, to quinones in the respiratory chain. The immediate electron acceptor for the enzyme in this species is believed to be ubiquinone. Couples the redox reaction to proton translocation (for every two electrons transferred, four hydrogen ions are translocated across the cytoplasmic membrane), and thus conserves the redox energy in a proton gradient. This Protochlamydia amoebophila (strain UWE25) protein is NADH-quinone oxidoreductase subunit I (nuoI).